A 465-amino-acid chain; its full sequence is uncharacterized protein (465 aa).

In terms of domain architecture, TRAM spans 1–50 (MEITDLAAEGNALCRIDDMVMFVPFAAPGDRCTVQVVKKKRNFMQGRIVS). Positions 63, 69, 72, and 168 each coordinate [4Fe-4S] cluster. Residues glutamine 293, tyrosine 322, glutamate 343, and aspartate 392 each contribute to the S-adenosyl-L-methionine site. The Nucleophile role is filled by cysteine 419.

This sequence belongs to the class I-like SAM-binding methyltransferase superfamily. RNA M5U methyltransferase family.

This is an uncharacterized protein from Porphyromonas gingivalis (strain ATCC BAA-308 / W83).